A 365-amino-acid polypeptide reads, in one-letter code: Undecaprenyl-phosphate alpha-N-acetylglucosaminyl 1-phosphate transferase (365 aa).

The next 10 membrane-spanning stretches (helical) occupy residues 3–23 (LLTM…FLFV), 45–65 (GLIP…AFLI), 99–119 (IRAF…GLYL), 132–152 (VLGP…INAF), 157–177 (GIDG…GILL), 187–207 (LWCF…LGLL), 213–233 (VFMG…ILLQ), 242–262 (INPV…IAIM), 293–313 (QAFV…VIGE), and 315–335 (LTFI…LLYG).

The protein belongs to the glycosyltransferase 4 family. WecA subfamily. Mg(2+) serves as cofactor. Requires Mn(2+) as cofactor.

Its subcellular location is the cell inner membrane. The catalysed reaction is di-trans,octa-cis-undecaprenyl phosphate + UDP-N-acetyl-alpha-D-glucosamine = N-acetyl-alpha-D-glucosaminyl-di-trans,octa-cis-undecaprenyl diphosphate + UMP. It functions in the pathway bacterial outer membrane biogenesis; LPS O-antigen biosynthesis. It participates in bacterial outer membrane biogenesis; enterobacterial common antigen biosynthesis. Functionally, catalyzes the transfer of the GlcNAc-1-phosphate moiety from UDP-GlcNAc onto the carrier lipid undecaprenyl phosphate (C55-P), yielding GlcNAc-pyrophosphoryl-undecaprenyl (GlcNAc-PP-C55). In Yersinia pestis, this protein is Undecaprenyl-phosphate alpha-N-acetylglucosaminyl 1-phosphate transferase.